The chain runs to 379 residues: tRNA 2-selenouridine synthase (379 aa).

The region spanning 15 to 138 (FQQNIPLMDV…ARNYLIKQIE (124 aa)) is the Rhodanese domain. C98 functions as the S-selanylcysteine intermediate in the catalytic mechanism.

It belongs to the SelU family. As to quaternary structure, monomer.

The catalysed reaction is 5-methylaminomethyl-2-thiouridine(34) in tRNA + selenophosphate + (2E)-geranyl diphosphate + H2O + H(+) = 5-methylaminomethyl-2-selenouridine(34) in tRNA + (2E)-thiogeraniol + phosphate + diphosphate. It carries out the reaction 5-methylaminomethyl-2-thiouridine(34) in tRNA + (2E)-geranyl diphosphate = 5-methylaminomethyl-S-(2E)-geranyl-thiouridine(34) in tRNA + diphosphate. It catalyses the reaction 5-methylaminomethyl-S-(2E)-geranyl-thiouridine(34) in tRNA + selenophosphate + H(+) = 5-methylaminomethyl-2-(Se-phospho)selenouridine(34) in tRNA + (2E)-thiogeraniol. The enzyme catalyses 5-methylaminomethyl-2-(Se-phospho)selenouridine(34) in tRNA + H2O = 5-methylaminomethyl-2-selenouridine(34) in tRNA + phosphate. In terms of biological role, involved in the post-transcriptional modification of the uridine at the wobble position (U34) of tRNA(Lys), tRNA(Glu) and tRNA(Gln). Catalyzes the conversion of 2-thiouridine (S2U-RNA) to 2-selenouridine (Se2U-RNA). Acts in a two-step process involving geranylation of 2-thiouridine (S2U) to S-geranyl-2-thiouridine (geS2U) and subsequent selenation of the latter derivative to 2-selenouridine (Se2U) in the tRNA chain. The polypeptide is tRNA 2-selenouridine synthase (Bdellovibrio bacteriovorus (strain ATCC 15356 / DSM 50701 / NCIMB 9529 / HD100)).